Consider the following 765-residue polypeptide: Probable ATP-dependent RNA helicase DDX27 (765 aa).

The interval 1 to 48 is disordered; the sequence is MLSELGFIRTIGEDEDVQVEPETDSEDEEEEGPIVLGRKQKALQKNRS. The span at 13-32 shows a compositional bias: acidic residues; that stretch reads EDEDVQVEPETDSEDEEEEG. Residues Ser25 and Ser48 each carry the phosphoserine modification. Residues 55-57 carry the Required for interaction with the PEBOW complex motif; the sequence is FVF. The disordered stretch occupies residues 88 to 148; that stretch reads EKIEKVRKKR…ESETDYSSAD (61 aa). A compositionally biased stretch (basic and acidic residues) spans 98-119; it reads KTEDKEAKSGKSEKEKEAKEGS. Phosphoserine occurs at positions 135 and 146. The Nuclear localization signal motif lies at 164-169; the sequence is KKKKKK. Residues 187 to 215 carry the Q motif motif; sequence LSFQDMNLSRPLLKAITAMGFKQPTPIQK. Positions 218–392 constitute a Helicase ATP-binding domain; sequence IPVGLLGKDI…SVSLKNPVRI (175 aa). Residue 231-238 coordinates ATP; it reads AATGTGKT. The DEAD box signature appears at 340-343; sequence DEAD. The Helicase C-terminal domain occupies 426–572; that stretch reads LLMRTFTDHV…DVILKFRDKI (147 aa). 2 stretches are compositionally biased toward basic residues: residues 685 to 694 and 744 to 765; these read KRNRRAKRAR and LGLP…KRRK. The tract at residues 685–765 is disordered; sequence KRNRRAKRAR…KSKSRYKRRK (81 aa).

Belongs to the DEAD box helicase family. DDX27/DRS1 subfamily. As to quaternary structure, associates with PeBoW complex, composed of BOP1, PES1 and WDR12. Interacts directly with BOP1 and PES1.

It localises to the nucleus. Its subcellular location is the nucleolus. The protein localises to the chromosome. It catalyses the reaction ATP + H2O = ADP + phosphate + H(+). Probable ATP-dependent RNA helicase. Component of the nucleolar ribosomal RNA (rRNA) processing machinery that regulates 3' end formation of ribosomal 47S rRNA. This chain is Probable ATP-dependent RNA helicase DDX27 (DDX27), found in Bos taurus (Bovine).